The sequence spans 321 residues: Glucokinase (321 aa).

8 to 13 (GDVGGT) provides a ligand contact to ATP.

The protein belongs to the bacterial glucokinase family.

The protein resides in the cytoplasm. It carries out the reaction D-glucose + ATP = D-glucose 6-phosphate + ADP + H(+). In Citrobacter koseri (strain ATCC BAA-895 / CDC 4225-83 / SGSC4696), this protein is Glucokinase.